Here is a 412-residue protein sequence, read N- to C-terminus: Serine hydroxymethyltransferase (412 aa).

Residues Leu-117 and 121-123 each bind (6S)-5,6,7,8-tetrahydrofolate; that span reads GHL. Lys-226 is modified (N6-(pyridoxal phosphate)lysine). 349-351 is a binding site for (6S)-5,6,7,8-tetrahydrofolate; it reads SPF.

It belongs to the SHMT family. As to quaternary structure, homodimer. Pyridoxal 5'-phosphate serves as cofactor.

The protein resides in the cytoplasm. The catalysed reaction is (6R)-5,10-methylene-5,6,7,8-tetrahydrofolate + glycine + H2O = (6S)-5,6,7,8-tetrahydrofolate + L-serine. Its pathway is one-carbon metabolism; tetrahydrofolate interconversion. The protein operates within amino-acid biosynthesis; glycine biosynthesis; glycine from L-serine: step 1/1. Functionally, catalyzes the reversible interconversion of serine and glycine with tetrahydrofolate (THF) serving as the one-carbon carrier. This reaction serves as the major source of one-carbon groups required for the biosynthesis of purines, thymidylate, methionine, and other important biomolecules. Also exhibits THF-independent aldolase activity toward beta-hydroxyamino acids, producing glycine and aldehydes, via a retro-aldol mechanism. The protein is Serine hydroxymethyltransferase of Nitratidesulfovibrio vulgaris (strain ATCC 29579 / DSM 644 / CCUG 34227 / NCIMB 8303 / VKM B-1760 / Hildenborough) (Desulfovibrio vulgaris).